The sequence spans 372 residues: Nickel transporter NicT (372 aa).

8 helical membrane passes run 30–50 (LMFAVIVALHLVGWLTVTLLV), 55–75 (LSLGGKAFGIGVGLTAYTLGL), 104–124 (VGFFFSLGHSTVVFGLAVMLV), 152–172 (ISGAFLYLIGILNVIVLVGIV), 218–238 (VGFLFGLGFDTATEIALLVLA), 245–265 (GLPWYAILCLPVLFAAGMCLL), 294–314 (VTGLSVAVALLIGSVELLGLI), and 335–355 (TVGFVVVAMFALTWAIALLVW).

This sequence belongs to the NiCoT transporter (TC 2.A.52) family.

It localises to the cell membrane. It catalyses the reaction Ni(2+)(in) = Ni(2+)(out). Export of the fluoroquinolone antibiotic norfloxacin is inhibited by the proton ionophore carbonyl cyanide m-chlorophenylhydrazone (CCCP). Nickel may influence the extrusion of antibiotics possibly by facilitating the proton motive force-dependent efflux process. In terms of biological role, involved in nickel uptake. In addition, acts as a drug efflux pump and contributes to moderate tolerance towards different classes of antibiotics, including fluoroquinolones, aminoglycosides and the anti-TB drug isoniazid, with a preference for fluoroquinolones. The drug efflux function is probably dependent on proton motive force (pmf) or ion gradient, and might be facilitated by the presence of Ni(2+) ions. This Mycobacterium tuberculosis (strain ATCC 25618 / H37Rv) protein is Nickel transporter NicT.